The chain runs to 338 residues: Ferrochelatase (338 aa).

Residues His207 and Glu293 each contribute to the Fe cation site.

Belongs to the ferrochelatase family.

Its subcellular location is the cytoplasm. It carries out the reaction heme b + 2 H(+) = protoporphyrin IX + Fe(2+). It participates in porphyrin-containing compound metabolism; protoheme biosynthesis; protoheme from protoporphyrin-IX: step 1/1. Functionally, catalyzes the ferrous insertion into protoporphyrin IX. In Shewanella denitrificans (strain OS217 / ATCC BAA-1090 / DSM 15013), this protein is Ferrochelatase.